The chain runs to 84 residues: MPRPAYRSRSLRRVKVRTPGGRTVVHYEKRAKGVPKCPVTNLPLGGMNHKVYRFGISIRAPSRPYGGVFSHKVLARALRLAVRG.

The protein belongs to the eukaryotic ribosomal protein eL34 family.

The polypeptide is Large ribosomal subunit protein eL34 (Pyrobaculum islandicum (strain DSM 4184 / JCM 9189 / GEO3)).